The sequence spans 102 residues: MKDLRTLAAYALALLLLATFVSYSRSAPMGSFQRRNWTPQAMLYLKGTQGRRFVSEDRNEGDLYDTIRLESQSQNTENLSISKAAAFLLNVLQQARDEGEPY.

The N-terminal stretch at 1–26 (MKDLRTLAAYALALLLLATFVSYSRS) is a signal peptide. Positions 27–35 (APMGSFQRR) are excised as a propeptide. Q49 carries the glutamine amide modification. The propeptide occupies 50-102 (GRRFVSEDRNEGDLYDTIRLESQSQNTENLSISKAAAFLLNVLQQARDEGEPY).

This sequence belongs to the spexin family. In terms of tissue distribution, expressed in the anterior hypothalamus, ventromedial thalamic nucleus and medial longitudinal fasciculus of the brain (at protein level). Widely expressed. Expressed predominantly in the spleen, kidney, liver and testis. Expressed in olfactory bulb, pituitary, telencephalon, diencephalons, spinal cord, optic tectum, cerebellum and hypothalamus of the brain.

The protein resides in the secreted. Its subcellular location is the extracellular space. The protein localises to the cytoplasmic vesicle. It localises to the secretory vesicle. Functionally, plays a role in the regulation of food intake and body weight and in reproduction. May also play a role as a central modulator of cardiovascular and renal function and nociception. In terms of biological role, brain administration of the peptide inhibits food consumption. May function as a satiety factor for feeding control. Involved in the negative regulation of the reproductive axis by inhibiting luteinizing hormone secretion from pituitary cells. The polypeptide is Spexin prohormone 1 (spx) (Carassius auratus (Goldfish)).